The sequence spans 520 residues: Laccase (520 aa).

An N-terminal signal peptide occupies residues 1 to 21 (MSRFQSLLAFVVASLAAVAHA). Plastocyanin-like domains follow at residues 23-148 (IGPT…FVVY) and 160-302 (VDND…ILRY). 2 N-linked (GlcNAc...) asparagine glycosylation sites follow: asparagine 72 and asparagine 75. Cu cation contacts are provided by histidine 85, histidine 87, histidine 130, and histidine 132. 2 cysteine pairs are disulfide-bonded: cysteine 106–cysteine 509 and cysteine 138–cysteine 226. Residues asparagine 210, asparagine 229, and asparagine 354 are each glycosylated (N-linked (GlcNAc...) asparagine). The 123-residue stretch at 369-491 (TVPVLLQIIS…AGFAVVFAED (123 aa)) folds into the Plastocyanin-like 3 domain. Histidine 416, histidine 419, histidine 421, histidine 473, cysteine 474, histidine 475, and histidine 479 together coordinate Cu cation.

The protein belongs to the multicopper oxidase family. The cofactor is Cu cation.

The protein resides in the secreted. It catalyses the reaction 4 hydroquinone + O2 = 4 benzosemiquinone + 2 H2O. Lignin degradation and detoxification of lignin-derived products. Has activity towards guaiacol. The sequence is that of Laccase from Trametes hirsuta (White-rot fungus).